The following is a 136-amino-acid chain: Nucleoside diphosphate kinase (136 aa).

6 residues coordinate ATP: Lys10, Phe58, Arg86, Thr92, Arg104, and Asn114. The active-site Pros-phosphohistidine intermediate is the His117.

It belongs to the NDK family. In terms of assembly, homotetramer. Mg(2+) is required as a cofactor.

Its subcellular location is the cytoplasm. It carries out the reaction a 2'-deoxyribonucleoside 5'-diphosphate + ATP = a 2'-deoxyribonucleoside 5'-triphosphate + ADP. It catalyses the reaction a ribonucleoside 5'-diphosphate + ATP = a ribonucleoside 5'-triphosphate + ADP. Major role in the synthesis of nucleoside triphosphates other than ATP. The ATP gamma phosphate is transferred to the NDP beta phosphate via a ping-pong mechanism, using a phosphorylated active-site intermediate. This chain is Nucleoside diphosphate kinase, found in Corynebacterium jeikeium (strain K411).